Here is a 454-residue protein sequence, read N- to C-terminus: MTKSQVNTWGPAISSPAELTVIIVGLGIAGLTAAIECHRKGYTVIGLEKKPDANQLGDIIGLSGNSMRILAEWNNGSLAHLIDDDITCDVTALELFDAEGHQRLAMPYNANDPNQGYLFRRTGLLTKLCHYASQLGIDLRFGVNVDGYWETDSSAGVYANNEKITGDCVVAADGFHSKARAIITGETPAPEDIGVVAYRSIFDADAIADVPEAQWILKKAQTADIWHTYYAKDTMVAIGTAARGRYVHWGCAGALEDRSESWMQPAAPYPVLKCLESWPVGGQLAAAIARTPPGKCFQQALRAIPPLKRWVSTGGRMIVIGDAAHSFLPYAGQGGNQAIEDAAVLGICLELAGTPNVPLALRVVEKLRHGRVSLIQKGSVEAGDCFLDAAWESDDTAERPTAFTHQAWVYAHNCVEHAYKQFHAAAEAVINGREYTPTNVPTDGKFRQQDGKCM.

Residues 15–35 (SPAELTVIIVGLGIAGLTAAI) form a helical membrane-spanning segment. FAD contacts are provided by Glu48 and Gly61. N-linked (GlcNAc...) asparagine glycosylation is present at Asn75. FAD is bound at residue Arg121. Active-site residues include Arg199 and Tyr229. Asp322 and Gly335 together coordinate FAD.

This sequence belongs to the paxM FAD-dependent monooxygenase family. FAD serves as cofactor.

The protein localises to the membrane. The catalysed reaction is notoamide E + NADPH + O2 + H(+) = notoamide C + NADP(+) + H2O. It carries out the reaction notoamide E + NADPH + O2 + H(+) = notoamide D + NADP(+) + H2O. It functions in the pathway alkaloid biosynthesis. Its function is as follows. FAD-dependent monooxygenase; part of the gene cluster that mediates the biosynthesis of notoamide, a fungal indole alkaloid that belongs to a family of natural products containing a characteristic bicyclo[2.2.2]diazaoctane core. The first step of notoamide biosynthesis involves coupling of L-proline and L-tryptophan by the bimodular NRPS notE, to produce cyclo-L-tryptophan-L-proline called brevianamide F. The reverse prenyltransferase notF then acts as a deoxybrevianamide E synthase and converts brevianamide F to deoxybrevianamide E via reverse prenylation at C-2 of the indole ring leading to the bicyclo[2.2.2]diazaoctane core. Deoxybrevianamide E is further hydroxylated at C-6 of the indole ring, likely catalyzed by the cytochrome P450 monooxygenase notG, to yield 6-hydroxy-deoxybrevianamide E. 6-hydroxy-deoxybrevianamide E is a specific substrate of the prenyltransferase notC for normal prenylation at C-7 to produce 6-hydroxy-7-prenyl-deoxybrevianamide, also called notoamide S. As the proposed pivotal branching point in notoamide biosynthesis, notoamide S can be diverted to notoamide E through an oxidative pyran ring closure putatively catalyzed by either notH cytochrome P450 monooxygenase or the notD FAD-linked oxidoreductase. This step would be followed by an indole 2,3-epoxidation-initiated pinacol-like rearrangement catalyzed by the notB FAD-dependent monooxygenase leading to the formation of notoamide C and notoamide D. On the other hand notoamide S is converted to notoamide T by notH (or notD), a bifunctional oxidase that also functions as the intramolecular Diels-Alderase responsible for generation of (+)-notoamide T. To generate antipodal (-)-notoaminide T, notH' (or notD') in Aspergillus versicolor is expected to catalyze a Diels-Alder reaction leading to the opposite stereochemistry. The remaining oxidoreductase notD (or notH) likely catalyzes the oxidative pyran ring formation to yield (+)-stephacidin A. The FAD-dependent monooxygenase notI is highly similar to notB and is predicted to catalyze a similar conversion from (+)-stephacidin A to (-)-notoamide B via the 2,3-epoxidation of (+)-stephacidin A followed by a pinacol-type rearrangement. Finally, it remains unclear which enzyme could be responsible for the final hydroxylation steps leading to notoamide A and sclerotiamide. This is Notoamide E oxidase notB from Aspergillus sp. (strain MF297-2).